A 156-amino-acid polypeptide reads, in one-letter code: Peptide deformylase 1 (156 aa).

Fe cation-binding residues include cysteine 90 and histidine 132. Glutamate 133 is an active-site residue. Histidine 136 contributes to the Fe cation binding site.

It belongs to the polypeptide deformylase family. Fe(2+) serves as cofactor.

The catalysed reaction is N-terminal N-formyl-L-methionyl-[peptide] + H2O = N-terminal L-methionyl-[peptide] + formate. Its function is as follows. Removes the formyl group from the N-terminal Met of newly synthesized proteins. Requires at least a dipeptide for an efficient rate of reaction. N-terminal L-methionine is a prerequisite for activity but the enzyme has broad specificity at other positions. This Bacillus cereus (strain ATCC 14579 / DSM 31 / CCUG 7414 / JCM 2152 / NBRC 15305 / NCIMB 9373 / NCTC 2599 / NRRL B-3711) protein is Peptide deformylase 1.